The sequence spans 37 residues: Calcitonin gene-related peptide (37 aa).

An intrachain disulfide couples C2 to C7. F37 bears the Phenylalanine amide mark.

This sequence belongs to the calcitonin family.

In terms of biological role, CGRP induces vasodilation. It dilates a variety of vessels including the coronary, cerebral and systemic vasculature. Its abundance in the CNS also points toward a neurotransmitter or neuromodulator role. The polypeptide is Calcitonin gene-related peptide (Pelophylax ridibundus (Marsh frog)).